The following is a 72-amino-acid chain: Small ribosomal subunit protein bS18c (72 aa).

This sequence belongs to the bacterial ribosomal protein bS18 family. In terms of assembly, part of the 30S ribosomal subunit.

The protein localises to the plastid. Its subcellular location is the chloroplast. This chain is Small ribosomal subunit protein bS18c, found in Thalassiosira pseudonana (Marine diatom).